The sequence spans 385 residues: L-arabinitol 4-dehydrogenase (385 aa).

8 residues coordinate Zn(2+): cysteine 54, histidine 79, glutamate 80, cysteine 109, cysteine 112, cysteine 115, cysteine 123, and glutamate 164. Residues 191-192 (PI), aspartate 212, arginine 217, isoleucine 292, and 316-318 (QYR) each bind NAD(+).

It belongs to the zinc-containing alcohol dehydrogenase family. In terms of assembly, homotetramer. Zn(2+) serves as cofactor.

It catalyses the reaction L-arabinitol + NAD(+) = L-xylulose + NADH + H(+). It functions in the pathway carbohydrate degradation; L-arabinose degradation via L-arabinitol; D-xylulose 5-phosphate from L-arabinose (fungal route): step 2/5. Functionally, catalyzes the NAD-dependent oxidation of L-arabinitol to L-xylulose in the fungal L-arabinose catabolic pathway. L-arabinose catabolism is important for using plant material as a carbon source. NADP cannot act as a cosubstrate. The sequence is that of L-arabinitol 4-dehydrogenase (lad1) from Penicillium rubens (strain ATCC 28089 / DSM 1075 / NRRL 1951 / Wisconsin 54-1255) (Penicillium chrysogenum).